A 235-amino-acid polypeptide reads, in one-letter code: MINKTKRLMVSRQVKIPRKTYFWGPTPNPGMHPKDQSVTLLSIIRDYLKLSDKEREAARILANGLVKVDGKTVREKKFAVGFMDVIEINGESYRVVYNDQGALVLMKETKERASMKLLKVRSKVIAPGNRIQLGTHDGRTFITDDKSKKVGDVWAVSVPDMKISEIIKMQPGNKAYITAGSHVNQTGTISKIEAKEGSSANLVHFQEGFSTIKDHVFMIGSSKFSFVLSPEEVIP.

The 62-residue stretch at 38–99 (VTLLSIIRDY…GESYRVVYND (62 aa)) folds into the S4 RNA-binding domain.

It belongs to the eukaryotic ribosomal protein eS4 family.

In Thermoplasma acidophilum (strain ATCC 25905 / DSM 1728 / JCM 9062 / NBRC 15155 / AMRC-C165), this protein is Small ribosomal subunit protein eS4 (rps4e).